A 251-amino-acid chain; its full sequence is Flap endonuclease Xni (251 aa).

Asp104 provides a ligand contact to Mg(2+). The 90-residue stretch at 160-249 (VLPRQLPDYW…IDGNLQQLRL (90 aa)) folds into the 5'-3' exonuclease domain. The K(+) site is built by Leu171, Ala172, Pro180, Val182, and Ile185. The segment at 184–189 (GIGPKS) is interaction with DNA.

This sequence belongs to the Xni family. Requires Mg(2+) as cofactor. It depends on K(+) as a cofactor.

In terms of biological role, has flap endonuclease activity. During DNA replication, flap endonucleases cleave the 5'-overhanging flap structure that is generated by displacement synthesis when DNA polymerase encounters the 5'-end of a downstream Okazaki fragment. The polypeptide is Flap endonuclease Xni (Salmonella heidelberg (strain SL476)).